We begin with the raw amino-acid sequence, 463 residues long: Elongation factor 1-alpha 2 (463 aa).

Residue glycine 2 is modified to N,N,N-trimethylglycine. In terms of domain architecture, tr-type G spans 5–242; the sequence is KTHINIVVIG…DTILPPTRPT (238 aa). The G1 stretch occupies residues 14–21; that stretch reads GHVDSGKS. Aspartate 17, serine 18, glycine 19, lysine 20, serine 21, and threonine 22 together coordinate GTP. Residue aspartate 17 coordinates Mg(2+). Lysine 36 carries the post-translational modification N6,N6,N6-trimethyllysine; alternate. Lysine 36 bears the N6,N6-dimethyllysine; alternate mark. Lysine 36 is modified (N6-methyllysine; alternate). At lysine 55 the chain carries N6,N6,N6-trimethyllysine. Lysine 55 carries the N6,N6-dimethyllysine modification. A G2 region spans residues 70–74; it reads GITID. Residue lysine 79 is modified to N6,N6,N6-trimethyllysine. Positions 91–94 are G3; that stretch reads DAPG. GTP is bound by residues asparagine 153, lysine 154, and aspartate 156. A G4 region spans residues 153-156; it reads NKMD. The residue at position 163 (serine 163) is a Phosphoserine. Lysine 165 bears the N6,N6-dimethyllysine; alternate mark. Lysine 165 is modified (N6-methyllysine; alternate). An N6,N6,N6-trimethyllysine; alternate; by EEF1AKMT3 modification is found at lysine 165. Lysine 179 is subject to N6-acetyllysine. The GTP site is built by serine 194, glycine 195, and tryptophan 196. The segment at 194–196 is G5; sequence SGW. Position 224 is a phosphoserine (serine 224). A Phosphothreonine modification is found at threonine 239. 5-glutamyl glycerylphosphorylethanolamine occurs at positions 301 and 374. At lysine 439 the chain carries N6-acetyllysine. Residues 444 to 463 are disordered; the sequence is KSGGAGKVTKSAQKAQKAGK.

This sequence belongs to the TRAFAC class translation factor GTPase superfamily. Classic translation factor GTPase family. EF-Tu/EF-1A subfamily. In terms of assembly, homodimer; arranged in a 'head to tail' dimer configuration. Trimethylated at Lys-165 by EEF1AKMT3. Mono-, di-, and trimethylated at Lys-36 by EEF1AKMT4; trimethylated form is predominant. Methylation by EEF1AKMT4 contributes to the fine-tuning of translation rates for a subset of tRNAs. Trimethylated at the N-terminus and dimethylated at Lys-55 by METTL13.

It localises to the endoplasmic reticulum membrane. It catalyses the reaction GTP + H2O = GDP + phosphate + H(+). Its function is as follows. Translation elongation factor that catalyzes the GTP-dependent binding of aminoacyl-tRNA (aa-tRNA) to the A-site of ribosomes during the elongation phase of protein synthesis. Base pairing between the mRNA codon and the aa-tRNA anticodon promotes GTP hydrolysis, releasing the aa-tRNA from EEF1A1 and allowing its accommodation into the ribosome. The growing protein chain is subsequently transferred from the P-site peptidyl tRNA to the A-site aa-tRNA, extending it by one amino acid through ribosome-catalyzed peptide bond formation. This Bos taurus (Bovine) protein is Elongation factor 1-alpha 2 (EEF1A2).